Consider the following 379-residue polypeptide: Putative zinc metalloprotease sll0528 (379 aa).

The next 2 membrane-spanning stretches (helical) occupy residues Leu20–Leu40 and Gly54–Ala74. His75 contacts Zn(2+). The active site involves Glu76. His79 provides a ligand contact to Zn(2+). Transmembrane regions (helical) follow at residues Phe115 to Val135, Ile148 to Leu168, and Gly212 to Leu232. 2 consecutive CBS domains span residues Val257–Gln315 and Met322–Ala379.

Belongs to the peptidase M50B family. The cofactor is Zn(2+).

Its subcellular location is the cell membrane. In Synechocystis sp. (strain ATCC 27184 / PCC 6803 / Kazusa), this protein is Putative zinc metalloprotease sll0528.